The following is a 344-amino-acid chain: Arginine N-succinyltransferase (344 aa).

Leu-125 contributes to the succinyl-CoA binding site. His-229 (proton donor) is an active-site residue.

Belongs to the arginine N-succinyltransferase family.

It catalyses the reaction succinyl-CoA + L-arginine = N(2)-succinyl-L-arginine + CoA + H(+). It participates in amino-acid degradation; L-arginine degradation via AST pathway; L-glutamate and succinate from L-arginine: step 1/5. Catalyzes the transfer of succinyl-CoA to arginine to produce N(2)-succinylarginine. The protein is Arginine N-succinyltransferase of Escherichia coli (strain 55989 / EAEC).